The sequence spans 188 residues: dCTP deaminase (188 aa).

DCTP contacts are provided by residues lysine 111–arginine 116, threonine 135–glutamate 137, glutamine 156, tyrosine 170, and glutamine 180. Glutamate 137 functions as the Proton donor/acceptor in the catalytic mechanism.

Belongs to the dCTP deaminase family. As to quaternary structure, homotrimer.

The catalysed reaction is dCTP + H2O + H(+) = dUTP + NH4(+). The protein operates within pyrimidine metabolism; dUMP biosynthesis; dUMP from dCTP (dUTP route): step 1/2. Its function is as follows. Catalyzes the deamination of dCTP to dUTP. This Neisseria meningitidis serogroup B (strain ATCC BAA-335 / MC58) protein is dCTP deaminase.